Here is a 255-residue protein sequence, read N- to C-terminus: MAVGNINELPENILLELFIHIPARQLLLRCRPVCSLWRDLIDLVTLWKRKCLQEGFITEDWDQPVADWKIFYFLRSLQRNLLHNPCAEEGFEFWSLDVNGGDEWKVEDLSKDQRKEFPNDQVKKYFVTSYYTCLKSQVVDLKAEGYWEELMDTTRPDIEVKDWFAARPDCGSKYQLCVQLLSSAHAPLGTFQPDPVMIQQKSDAKWSEVSHTFSNYPPGVRYIWFQHGGVDTHYWAGWYGPRVTNSSITIGPPLP.

Residues 3 to 50 enclose the F-box domain; it reads VGNINELPENILLELFIHIPARQLLLRCRPVCSLWRDLIDLVTLWKRK. An FBA domain is found at 71 to 252; the sequence is FYFLRSLQRN…VTNSSITIGP (182 aa).

In terms of assembly, part of a SCF (SKP1-cullin-F-box) protein ligase complex. Interacts with SKP1 and CUL1. In terms of tissue distribution, expressed in brain, liver, pancreas and adipose tissue (at protein level). Widely expressed.

Functionally, substrate-recognition component of the SCF (SKP1-CUL1-F-box protein)-type E3 ubiquitin ligase complex. The protein is F-box only protein 44 (Fbxo44) of Mus musculus (Mouse).